A 501-amino-acid chain; its full sequence is GMP synthase [glutamine-hydrolyzing] (501 aa).

The Glutamine amidotransferase type-1 domain occupies 1–185 (MVLVVDYGSQ…LFNVCKLEKN (185 aa)). Cys75 (nucleophile) is an active-site residue. Residues His159 and Glu161 contribute to the active site. One can recognise a GMPS ATP-PPase domain in the interval 186-376 (WKIGDLVEEK…LGIPDRIINR (191 aa)). Residue 213-219 (SGGVDSS) participates in ATP binding.

As to quaternary structure, homodimer.

The enzyme catalyses XMP + L-glutamine + ATP + H2O = GMP + L-glutamate + AMP + diphosphate + 2 H(+). Its pathway is purine metabolism; GMP biosynthesis; GMP from XMP (L-Gln route): step 1/1. Catalyzes the synthesis of GMP from XMP. The chain is GMP synthase [glutamine-hydrolyzing] from Thermotoga petrophila (strain ATCC BAA-488 / DSM 13995 / JCM 10881 / RKU-1).